A 356-amino-acid chain; its full sequence is Nicotinate-nucleotide--dimethylbenzimidazole phosphoribosyltransferase (356 aa).

Residue Glu317 is the Proton acceptor of the active site.

Belongs to the CobT family. Homodimer.

It catalyses the reaction 5,6-dimethylbenzimidazole + nicotinate beta-D-ribonucleotide = alpha-ribazole 5'-phosphate + nicotinate + H(+). It participates in nucleoside biosynthesis; alpha-ribazole biosynthesis; alpha-ribazole from 5,6-dimethylbenzimidazole: step 1/2. Its function is as follows. Catalyzes the synthesis of alpha-ribazole-5'-phosphate from nicotinate mononucleotide (NAMN) and 5,6-dimethylbenzimidazole (DMB). In Salmonella agona (strain SL483), this protein is Nicotinate-nucleotide--dimethylbenzimidazole phosphoribosyltransferase.